An 88-amino-acid chain; its full sequence is Acyl-CoA-binding domain-containing protein 7 (88 aa).

Residues 3 to 88 (LQADFDQAAQ…ARELIEKYGI (86 aa)) enclose the ACB domain. Residues arginine 15, 30–34 (YGLYK), lysine 56, and tyrosine 75 each bind an acyl-CoA.

This sequence belongs to the ACBD7 family.

Binds medium- and long-chain acyl-CoA esters. The chain is Acyl-CoA-binding domain-containing protein 7 (Acbd7) from Mus musculus (Mouse).